A 120-amino-acid polypeptide reads, in one-letter code: Small ribosomal subunit protein uS11 (120 aa).

The protein belongs to the universal ribosomal protein uS11 family. Part of the 30S ribosomal subunit. Interacts with proteins S7 and S18. Binds to IF-3.

Its function is as follows. Located on the platform of the 30S subunit, it bridges several disparate RNA helices of the 16S rRNA. Forms part of the Shine-Dalgarno cleft in the 70S ribosome. The chain is Small ribosomal subunit protein uS11 from Neorickettsia sennetsu (strain ATCC VR-367 / Miyayama) (Ehrlichia sennetsu).